A 589-amino-acid polypeptide reads, in one-letter code: Netrin-G2 (589 aa).

The first 17 residues, 1–17 (MLRLLALFLHCLPLVSG), serve as a signal peptide directing secretion. Disulfide bonds link cysteine 22–cysteine 39, cysteine 61–cysteine 81, and cysteine 69–cysteine 77. Residues 35–286 (EFYACQPKVM…AISNIEVIGR (252 aa)) enclose the Laminin N-terminal domain. Positions 69–88 (CSHENPYLCSNECDASNPDL) are NGL discriminant loop I. 2 N-linked (GlcNAc...) asparagine glycosylation sites follow: asparagine 122 and asparagine 128. Cysteine 171 and cysteine 195 are disulfide-bonded. The NGL discriminant loop II stretch occupies residues 201–203 (RWA). The segment at 264 to 267 (TYVQ) is NGL discriminant loop III. 15 cysteine pairs are disulfide-bonded: cysteine 287–cysteine 296, cysteine 289–cysteine 305, cysteine 307–cysteine 316, cysteine 319–cysteine 344, cysteine 413–cysteine 422, cysteine 415–cysteine 433, cysteine 436–cysteine 445, cysteine 448–cysteine 466, cysteine 469–cysteine 481, cysteine 471–cysteine 487, cysteine 489–cysteine 498, cysteine 501–cysteine 511, cysteine 516–cysteine 529, cysteine 523–cysteine 535, and cysteine 537–cysteine 546. 3 consecutive Laminin EGF-like domains span residues 287-346 (CKCN…ACAA), 413-468 (CECY…VCIE), and 469-513 (CNCN…GCYP). Residue asparagine 310 is glycosylated (N-linked (GlcNAc...) asparagine). Asparagine 455 is a glycosylation site (N-linked (GlcNAc...) asparagine). Asparagine 482 carries N-linked (GlcNAc...) asparagine glycosylation. The GPI-anchor amidated glycine moiety is linked to residue glycine 566. Positions 567–589 (IVPRPDTLLGCLLLLGLAARLAC) are cleaved as a propeptide — removed in mature form.

In terms of assembly, interacts with LRRC4. In terms of processing, N-glycosylated. Expression is restricted primarily to neurons of the CNS, particularly in the cerebral cortex, habenular nucleus and superior colliculus. Low levels in lung, kidney, heart and spleen.

It is found in the cell membrane. Its function is as follows. Involved in controlling patterning and neuronal circuit formation at the laminar, cellular, subcellular and synaptic levels. Promotes neurite outgrowth of both axons and dendrites. The chain is Netrin-G2 (Ntng2) from Mus musculus (Mouse).